Consider the following 440-residue polypeptide: Chromosome partition protein MukF (440 aa).

The interval 208 to 236 (LSETSGTLRELQDTLEAAGDKLQANLLRI) is leucine-zipper.

The protein belongs to the MukF family. As to quaternary structure, interacts, and probably forms a ternary complex, with MukE and MukB via its C-terminal region. The complex formation is stimulated by calcium or magnesium. It is required for an interaction between MukE and MukB.

The protein resides in the cytoplasm. It localises to the nucleoid. Its function is as follows. Involved in chromosome condensation, segregation and cell cycle progression. May participate in facilitating chromosome segregation by condensation DNA from both sides of a centrally located replisome during cell division. Not required for mini-F plasmid partitioning. Probably acts via its interaction with MukB and MukE. Overexpression results in anucleate cells. It has a calcium binding activity. In Shigella boydii serotype 18 (strain CDC 3083-94 / BS512), this protein is Chromosome partition protein MukF.